The primary structure comprises 473 residues: Tyrosine phenol-lyase (473 aa).

Lys-257 carries the post-translational modification N6-(pyridoxal phosphate)lysine.

It belongs to the beta-eliminating lyase family. In terms of assembly, homotetramer. Requires pyridoxal 5'-phosphate as cofactor.

The catalysed reaction is L-tyrosine + H2O = phenol + pyruvate + NH4(+). This Intrasporangium calvum (strain ATCC 23552 / DSM 43043 / JCM 3097 / NBRC 12989 / NCIMB 10167 / NRRL B-3866 / 7 KIP) protein is Tyrosine phenol-lyase.